We begin with the raw amino-acid sequence, 387 residues long: ATP phosphoribosyltransferase regulatory subunit (387 aa).

Belongs to the class-II aminoacyl-tRNA synthetase family. HisZ subfamily. As to quaternary structure, heteromultimer composed of HisG and HisZ subunits.

The protein resides in the cytoplasm. It functions in the pathway amino-acid biosynthesis; L-histidine biosynthesis; L-histidine from 5-phospho-alpha-D-ribose 1-diphosphate: step 1/9. In terms of biological role, required for the first step of histidine biosynthesis. May allow the feedback regulation of ATP phosphoribosyltransferase activity by histidine. The chain is ATP phosphoribosyltransferase regulatory subunit from Ralstonia pickettii (strain 12J).